A 349-amino-acid chain; its full sequence is Heat-inducible transcription repressor HrcA (349 aa).

This sequence belongs to the HrcA family.

Its function is as follows. Negative regulator of class I heat shock genes (grpE-dnaK-dnaJ and groELS operons). Prevents heat-shock induction of these operons. The protein is Heat-inducible transcription repressor HrcA of Xylella fastidiosa (strain 9a5c).